We begin with the raw amino-acid sequence, 273 residues long: Large ribosomal subunit protein uL2 (273 aa).

Disordered regions lie at residues 28–54 (KPYA…TRHI) and 221–273 (RGTA…RRTK). Low complexity predominate over residues 39 to 48 (KSGGRNNNGR).

This sequence belongs to the universal ribosomal protein uL2 family. Part of the 50S ribosomal subunit. Forms a bridge to the 30S subunit in the 70S ribosome.

In terms of biological role, one of the primary rRNA binding proteins. Required for association of the 30S and 50S subunits to form the 70S ribosome, for tRNA binding and peptide bond formation. It has been suggested to have peptidyltransferase activity; this is somewhat controversial. Makes several contacts with the 16S rRNA in the 70S ribosome. The sequence is that of Large ribosomal subunit protein uL2 from Pectobacterium carotovorum subsp. carotovorum (strain PC1).